The sequence spans 505 residues: Calcium/calmodulin-dependent protein kinase kinase 1 (505 aa).

The disordered stretch occupies residues 27–66 (HLEEAEEGPEPASNGVDPPPRARAASVIPGSASRPTPVRP). A phosphoserine mark is found at Ser-67 and Ser-74. Asymmetric dimethylarginine is present on Arg-78. Ser-100 is subject to Phosphoserine. Position 108 is a phosphothreonine (Thr-108). The Protein kinase domain occupies 128-409 (YKLQSEIGKG…VSDIKLHPWV (282 aa)). ATP contacts are provided by residues 134–142 (IGKGAYGVV) and Lys-157. Positions 167-189 (QYGFPRRPPPRGSQAPQGGPAKQ) are RP domain. The active-site Proton acceptor is the Asp-275. The autoinhibitory domain stretch occupies residues 435–440 (KNSVKL). The tract at residues 438–463 (VKLIPSWTTVILVKSMLRKRSFGNPF) is calmodulin-binding. Phosphoserine occurs at positions 458, 475, and 492. Positions 460 to 505 (GNPFEPQARREERSMSAPGNLLLKEGCGEGGKSPELPGVQEDEAAS) are disordered.

Belongs to the protein kinase superfamily. Ser/Thr protein kinase family. In terms of assembly, interacts with CAMK4 and calmodulin. In terms of processing, appears to be autophosphorylated. Phosphorylated at multiple sites by PRCAKA/PKA. Phosphorylation of Ser-458 is blocked upon binding to Ca(2+)/calmodulin. May be phosphorylated by CAMK1 and CAMK4. Mostly expressed in the brain with higher levels in cortex and hippocampus. Lower expression levels were detected in striatum, nucleus accumbens and cerebellum (at protein level). Abundant in forebrain, weaker in cerebellum and also detected in thymus and spleen.

Its subcellular location is the cytoplasm. The protein localises to the nucleus. It catalyses the reaction L-seryl-[protein] + ATP = O-phospho-L-seryl-[protein] + ADP + H(+). The enzyme catalyses L-threonyl-[protein] + ATP = O-phospho-L-threonyl-[protein] + ADP + H(+). Activated by Ca(2+)/calmodulin. Binding of calmodulin may relieve intrasteric autoinhibition. Partially inhibited upon phosphorylation by PRCAKA/PKA. May be regulated through phosphorylation by CAMK1 and CAMK4. Calcium/calmodulin-dependent protein kinase that belongs to a proposed calcium-triggered signaling cascade involved in a number of cellular processes. Phosphorylates CAMK1, CAMK1D, CAMK1G and CAMK4. Involved in regulating cell apoptosis. Promotes cell survival by phosphorylating AKT1/PKB that inhibits pro-apoptotic BAD/Bcl2-antagonist of cell death. The sequence is that of Calcium/calmodulin-dependent protein kinase kinase 1 (Camkk1) from Rattus norvegicus (Rat).